Consider the following 157-residue polypeptide: Transcription antitermination protein NusB (157 aa).

The protein belongs to the NusB family.

Functionally, involved in transcription antitermination. Required for transcription of ribosomal RNA (rRNA) genes. Binds specifically to the boxA antiterminator sequence of the ribosomal RNA (rrn) operons. This chain is Transcription antitermination protein NusB, found in Helicobacter hepaticus (strain ATCC 51449 / 3B1).